A 1302-amino-acid polypeptide reads, in one-letter code: Zinc finger protein 536 (1302 aa).

The disordered stretch occupies residues 1–26; it reads MEEASLCLGVSSTAPEAEPHLSGPVL. 7 consecutive C2H2-type zinc fingers follow at residues 130 to 152, 158 to 180, 274 to 297, 300 to 323, 345 to 367, 373 to 395, and 631 to 653; these read YPCPLCGKRFRFNSILSLHMRTH, FKCPYCDHRAAQKGNLKIHLRTH, FRCTFCKGKFKKREELDRHIRILH, YKCTLCDFAASQEEELISHVEKAH, FRCEVCGQVFSQAWFLKGHMRKH, HCCQICGRRFKEPWFLKNHMKVH, and TECPDCGRVFRTYHQVVVHSRVH. The segment at 650 to 736 is disordered; it reads SRVHKRDRKS…IGEEAGRAGG (87 aa). Positions 657 to 676 are enriched in basic and acidic residues; sequence RKSDEDALHVGVGLEERRGS. The span at 677–698 shows a compositional bias: polar residues; the sequence is GSDQESQSVSRSTTPGSSNVTE. 2 C2H2-type zinc fingers span residues 753–775 and 781–803; these read KDCPYCGKTFRTSHHLKVHLRIH and YKCPHCDYAGTQSASLKYHLERH. 4 disordered regions span residues 804-832, 855-897, 935-988, and 1133-1261; these read HRERQNGAGPLSGQPPNQEHKDETSSKAP, GPAS…SKSS, KDTK…APTL, and NKNT…GLEK. 2 positions are modified to phosphoserine: Ser-828 and Ser-829. The span at 869–883 shows a compositional bias: polar residues; it reads GDHSGQATGMPSELS. Over residues 935-973 the composition is skewed to basic and acidic residues; it reads KDTKDKVPSDAHPMKAHTAEGGEEKASMKPSQRKSEKSQ. Composition is skewed to acidic residues over residues 1161–1171 and 1179–1188; these read DLSDIASSEDM and NEDEELDTEP. Over residues 1198–1212 the composition is skewed to low complexity; sequence LSKDGSSEGGDSLLS.

This sequence belongs to the krueppel C2H2-type zinc-finger protein family. In terms of tissue distribution, expressed predominantly in the brain, while a weak signal is also detected in the heart and testis. Expression is abundant in neuronal cells of the cerebral cortex, hippocampus and hypothalamic area (at protein level).

The protein localises to the nucleus. In terms of biological role, transcriptional repressor that negatively regulates neuron differentiation by repressing retinoic acid-induced gene transcription. Binds and interrupts RARA from binding to retinoic acid response elements (RARE) composed of tandem 5'-AGGTCA-3' sites known as DR1-DR5. Recognizes and binds 2 copies of the core DNA sequence 5'-CCCCCA-3'. This Mus musculus (Mouse) protein is Zinc finger protein 536 (Znf536).